Consider the following 288-residue polypeptide: NH(3)-dependent NAD(+) synthetase (288 aa).

An ATP-binding site is contributed by 46–53; that stretch reads GISGGQDS. Residue Asp-52 participates in Mg(2+) binding. Arg-153 is a binding site for deamido-NAD(+). Position 173 (Thr-173) interacts with ATP. Glu-178 contributes to the Mg(2+) binding site. Residues Lys-186 and Asp-193 each coordinate deamido-NAD(+). The ATP site is built by Lys-202 and Thr-224. 273–274 serves as a coordination point for deamido-NAD(+); the sequence is HK.

Belongs to the NAD synthetase family. Homodimer.

The enzyme catalyses deamido-NAD(+) + NH4(+) + ATP = AMP + diphosphate + NAD(+) + H(+). It participates in cofactor biosynthesis; NAD(+) biosynthesis; NAD(+) from deamido-NAD(+) (ammonia route): step 1/1. Functionally, catalyzes the ATP-dependent amidation of deamido-NAD to form NAD. Uses ammonia as a nitrogen source. This is NH(3)-dependent NAD(+) synthetase from Deinococcus geothermalis (strain DSM 11300 / CIP 105573 / AG-3a).